Here is a 366-residue protein sequence, read N- to C-terminus: Galactoside alpha-(1,2)-fucosyltransferase 1 (366 aa).

The Cytoplasmic portion of the chain corresponds to methionine 1–histidine 8. A helical; Signal-anchor for type II membrane protein membrane pass occupies residues leucine 9–phenylalanine 25. Over leucine 26–proline 366 the chain is Lumenal. N-linked (GlcNAc...) asparagine glycans are attached at residues asparagine 66, asparagine 302, and asparagine 328.

Belongs to the glycosyltransferase 11 family.

It is found in the golgi apparatus. It localises to the golgi stack membrane. The enzyme catalyses a beta-D-galactosyl-(1-&gt;4)-N-acetyl-beta-D-glucosaminyl derivative + GDP-beta-L-fucose = an alpha-L-Fuc-(1-&gt;2)-beta-D-Gal-(1-&gt;4)-beta-D-GlcNAc derivative + GDP + H(+). The catalysed reaction is a ganglioside GA1 + GDP-beta-L-fucose = a ganglioside Fuc-GA1 + GDP + H(+). It carries out the reaction a beta-D-Gal-(1-&gt;3)-beta-D-GlcNAc-(1-&gt;3)-beta-D-Gal-(1-&gt;4)-beta-D-Glc-(1&lt;-&gt;1')-Cer(d18:1(4E)) + GDP-beta-L-fucose = alpha-L-fucosyl-(1-&gt;2)- beta-D-galactosyl-(1-&gt;3)-N-acetyl-beta-D-glucosaminyl-(1-&gt;3)-beta-D-galactosyl-(1-&gt;4)-beta-D-glucosyl-(1&lt;-&gt;1')-N-acylsphing-4-enine + GDP + H(+). It catalyses the reaction a neolactoside nLc4Cer(d18:1(4E)) + GDP-beta-L-fucose = a neolactoside IV(2)-alpha-Fuc-nLc4Cer(d18:1(4E)) + GDP + H(+). The enzyme catalyses a ganglioside GM1 + GDP-beta-L-fucose = a ganglioside Fuc-GM1 + GDP + H(+). The catalysed reaction is beta-D-galactosyl-(1-&gt;3)-N-acetyl-D-galactosamine + GDP-beta-L-fucose = alpha-L-fucosyl-(1-&gt;2)-beta-D-galactosyl-(1-&gt;3)-N-acetyl-D-galactosamine + GDP + H(+). Its pathway is protein modification; protein glycosylation. In terms of biological role, catalyzes the transfer of L-fucose, from a guanosine diphosphate-beta-L-fucose, to the terminal galactose residue of glycoconjugates through an alpha(1,2) linkage leading to H antigen synthesis that is an intermediate substrate in the synthesis of ABO blood group antigens. H antigen is essential for maturation of the glomerular layer of the main olfactory bulb, in cell migration and early cell-cell contacts during tumor associated angiogenesis. Preferentially fucosylates soluble lactose and to a lesser extent fucosylates glycolipids gangliosides GA1 and GM1a. This Ateles belzebuth (White-bellied spider monkey) protein is Galactoside alpha-(1,2)-fucosyltransferase 1.